A 542-amino-acid polypeptide reads, in one-letter code: Chaperonin GroEL 2 (542 aa).

ATP-binding positions include 30–33 (TLGP), K51, 87–91 (DGTTT), G415, and D496.

This sequence belongs to the chaperonin (HSP60) family. Forms a cylinder of 14 subunits composed of two heptameric rings stacked back-to-back. Interacts with the co-chaperonin GroES.

It is found in the cytoplasm. It catalyses the reaction ATP + H2O + a folded polypeptide = ADP + phosphate + an unfolded polypeptide.. In terms of biological role, together with its co-chaperonin GroES, plays an essential role in assisting protein folding. The GroEL-GroES system forms a nano-cage that allows encapsulation of the non-native substrate proteins and provides a physical environment optimized to promote and accelerate protein folding. The protein is Chaperonin GroEL 2 of Rhizobium leguminosarum.